Here is a 1425-residue protein sequence, read N- to C-terminus: Nephrocystin-4 (1425 aa).

The residue at position 145 (serine 145) is a Phosphoserine. Residues 448-554 (FSLSSDGPTE…VSHLEADLSQ (107 aa)) form a disordered region. Low complexity-rich tracts occupy residues 473 to 484 (PASPSGTPAPAA) and 507 to 530 (SPLSPALQSSSKPPLQPPDSSQSP). Positions 822–1425 (LTLANVGHAC…ETFCVKVLYQ (604 aa)) are sufficient for basal bodies localization.

This sequence belongs to the NPHP4 family. As to quaternary structure, interacts with NPHP1 and RPGRIP1L/NPHP8; NPHP1, NPHP4 and RPGRIP1L are proposed to form a functional NPHP1-4-8 module localized to cell-cell contacts and the ciliary transition zone; NPHP4 mediates the interaction between NPHP1 and RPGRIP1L. Interacts with IQCB1/NPHP5; the interaction likely requires additional interactors. Interacts with RPGRIP1, CEP164, JADE1, PALS1, INADL, PARD6A, INVS, DVL2. Interacts with INTU; INTU mediates the interaction between NPHP4 and DAAM1. Interacts with JADE1. Interacts with SPATA7. As to expression, expressed in the retina (at protein level).

The protein localises to the cytoplasm. Its subcellular location is the cytoskeleton. It localises to the cilium basal body. It is found in the microtubule organizing center. The protein resides in the centrosome. The protein localises to the cell junction. Its subcellular location is the tight junction. Its function is as follows. Involved in the organization of apical junctions; the function is proposed to implicate a NPHP1-4-8 module. Does not seem to be strictly required for ciliogenesis. Required for building functional cilia. Involved in the organization of the subapical actin network in multiciliated epithelial cells. Seems to recruit INT to basal bodies of motile cilia which subsequently interacts with actin-modifying proteins such as DAAM1. In cooperation with INVS may down-regulate the canonical Wnt pathway and promote the Wnt-PCP pathway by regulating expression and subcellular location of disheveled proteins. Stabilizes protein levels of JADE1 and promotes its translocation to the nucleus leading to cooperative inhibition of canonical Wnt signaling. Acts as negative regulator of the hippo pathway by association with LATS1 and modifying LATS1-dependent phosphorylation and localization of WWTR1/TAZ. The chain is Nephrocystin-4 (Nphp4) from Mus musculus (Mouse).